We begin with the raw amino-acid sequence, 381 residues long: Succinyl-diaminopimelate desuccinylase (381 aa).

Position 71 (His-71) interacts with Zn(2+). The active site involves Asp-73. Asp-104 contributes to the Zn(2+) binding site. Glu-138 (proton acceptor) is an active-site residue. 3 residues coordinate Zn(2+): Glu-139, Glu-167, and His-353.

It belongs to the peptidase M20A family. DapE subfamily. As to quaternary structure, homodimer. Zn(2+) is required as a cofactor. It depends on Co(2+) as a cofactor.

The enzyme catalyses N-succinyl-(2S,6S)-2,6-diaminopimelate + H2O = (2S,6S)-2,6-diaminopimelate + succinate. Its pathway is amino-acid biosynthesis; L-lysine biosynthesis via DAP pathway; LL-2,6-diaminopimelate from (S)-tetrahydrodipicolinate (succinylase route): step 3/3. Catalyzes the hydrolysis of N-succinyl-L,L-diaminopimelic acid (SDAP), forming succinate and LL-2,6-diaminopimelate (DAP), an intermediate involved in the bacterial biosynthesis of lysine and meso-diaminopimelic acid, an essential component of bacterial cell walls. The sequence is that of Succinyl-diaminopimelate desuccinylase from Shewanella halifaxensis (strain HAW-EB4).